Reading from the N-terminus, the 184-residue chain is Probable chemoreceptor glutamine deamidase CheD (184 aa).

It belongs to the CheD family.

The catalysed reaction is L-glutaminyl-[protein] + H2O = L-glutamyl-[protein] + NH4(+). In terms of biological role, probably deamidates glutamine residues to glutamate on methyl-accepting chemotaxis receptors (MCPs), playing an important role in chemotaxis. The protein is Probable chemoreceptor glutamine deamidase CheD of Rhizobium leguminosarum bv. trifolii (strain WSM2304).